The chain runs to 693 residues: Glycine--tRNA ligase beta subunit (693 aa).

Belongs to the class-II aminoacyl-tRNA synthetase family. In terms of assembly, tetramer of two alpha and two beta subunits.

The protein resides in the cytoplasm. It catalyses the reaction tRNA(Gly) + glycine + ATP = glycyl-tRNA(Gly) + AMP + diphosphate. In Shouchella clausii (strain KSM-K16) (Alkalihalobacillus clausii), this protein is Glycine--tRNA ligase beta subunit.